Reading from the N-terminus, the 114-residue chain is Hydrogenase maturation factor HypA (114 aa).

A Ni(2+)-binding site is contributed by His2. The Zn(2+) site is built by Cys73, Cys76, Cys89, and Cys92.

This sequence belongs to the HypA/HybF family.

In terms of biological role, involved in the maturation of [NiFe] hydrogenases. Required for nickel insertion into the metal center of the hydrogenase. This chain is Hydrogenase maturation factor HypA, found in Caldanaerobacter subterraneus subsp. tengcongensis (strain DSM 15242 / JCM 11007 / NBRC 100824 / MB4) (Thermoanaerobacter tengcongensis).